The chain runs to 262 residues: MPTAYIITVGNELLIGRVVNTNAAWLASKLTYLGYSVRRIVVVPDVEEDIVEAFREAMAKADVVISTGGLGPTPDDITNLAFCKALGAEPVVNEEALKMVREKYASRGYPMTEERVKMAMMPPGAVPLPNPVGTAPGILYETGGKIVVLLPGVPREMEAIFEGYVEPLLKSRGPPAHFSERVVTVRGVPEADVAPIIREVMRQNPRVYVKSHPKGLEVDAPLLQIHIYASAPTPQEAEGAVDAALKKLVELIKSKFSNAAIY.

This sequence belongs to the CinA family.

This is Protein Pcal_0062 from Pyrobaculum calidifontis (strain DSM 21063 / JCM 11548 / VA1).